Reading from the N-terminus, the 144-residue chain is 3-dehydroquinate dehydratase (144 aa).

The active-site Proton acceptor is Y23. Residues N74, H80, and D87 each coordinate substrate. H100 functions as the Proton donor in the catalytic mechanism. Substrate-binding positions include 101–102 (LS) and R111.

It belongs to the type-II 3-dehydroquinase family. As to quaternary structure, homododecamer.

The enzyme catalyses 3-dehydroquinate = 3-dehydroshikimate + H2O. It participates in metabolic intermediate biosynthesis; chorismate biosynthesis; chorismate from D-erythrose 4-phosphate and phosphoenolpyruvate: step 3/7. Its function is as follows. Catalyzes a trans-dehydration via an enolate intermediate. This chain is 3-dehydroquinate dehydratase, found in Haemophilus ducreyi (strain 35000HP / ATCC 700724).